The chain runs to 271 residues: Gap junction beta-5 protein (271 aa).

At 1–20 (MNWSVFEGLLSGVNKYSTAF) the chain is on the cytoplasmic side. A helical membrane pass occupies residues 21–40 (GRIWLSLVFVFRVLVYLVTA). Residues 41 to 75 (ERVWGDDQKDFDCNTRQPGCTNVCYDEFFPVSHVR) lie on the Extracellular side of the membrane. Residues 76–98 (LWALQLILVTCPSLLVVMHVAYR) traverse the membrane as a helical segment. The Cytoplasmic segment spans residues 99–124 (KAREKKYQQEVGKGYLYPNPGKKRGG). A helical transmembrane segment spans residues 125 to 147 (LWWTYVCSLLFKATIDIIFLYLF). The Extracellular portion of the chain corresponds to 148 to 182 (HAFYPRYTLPSMVKCHSAPCPNTVDCFIAKPSEKN). Residues 183-205 (IFIVFMLVTAIVCILLNLVELLY) form a helical membrane-spanning segment. Topologically, residues 206–271 (LVIKRCSECA…PRAHVKKTIL (66 aa)) are cytoplasmic. The disordered stretch occupies residues 217–237 (AKRPPTAHAKNDPNWANPSSK).

It belongs to the connexin family. Beta-type (group I) subfamily. In terms of assembly, a connexon is composed of a hexamer of connexins. Expressed in skin.

It localises to the cell membrane. The protein resides in the cell junction. Its subcellular location is the gap junction. In terms of biological role, one gap junction consists of a cluster of closely packed pairs of transmembrane channels, the connexons, through which materials of low MW diffuse from one cell to a neighboring cell. The polypeptide is Gap junction beta-5 protein (Gjb5) (Rattus norvegicus (Rat)).